The chain runs to 595 residues: Phosphomethylpyrimidine synthase (595 aa).

The segment covering 97–120 (GRDVRPEDNGFTKDDDPRAAREVF) has biased composition (basic and acidic residues). Residues 97–134 (GRDVRPEDNGFTKDDDPRAAREVFPRTSSHKPLRAKKG) are disordered. The segment covering 124–133 (SSHKPLRAKK) has biased composition (basic residues). Residues Asn-202, Met-231, Tyr-260, His-296, 316–318 (SRG), 357–360 (DGLR), and Glu-396 contribute to the substrate site. His-400 contributes to the Zn(2+) binding site. Substrate is bound at residue Tyr-423. Position 464 (His-464) interacts with Zn(2+). 3 residues coordinate [4Fe-4S] cluster: Cys-544, Cys-547, and Cys-552.

The protein belongs to the ThiC family. Requires [4Fe-4S] cluster as cofactor.

It catalyses the reaction 5-amino-1-(5-phospho-beta-D-ribosyl)imidazole + S-adenosyl-L-methionine = 4-amino-2-methyl-5-(phosphooxymethyl)pyrimidine + CO + 5'-deoxyadenosine + formate + L-methionine + 3 H(+). Its pathway is cofactor biosynthesis; thiamine diphosphate biosynthesis. Functionally, catalyzes the synthesis of the hydroxymethylpyrimidine phosphate (HMP-P) moiety of thiamine from aminoimidazole ribotide (AIR) in a radical S-adenosyl-L-methionine (SAM)-dependent reaction. This chain is Phosphomethylpyrimidine synthase, found in Halalkalibacterium halodurans (strain ATCC BAA-125 / DSM 18197 / FERM 7344 / JCM 9153 / C-125) (Bacillus halodurans).